We begin with the raw amino-acid sequence, 420 residues long: MTLVEKILSKKVGYEVCAGDSIEVEVDLAMTHDGTTPLAYKALKEMSDSVWNPDKIVVAFDHNVPPNTVKAAEMQKLALEFVKRFGIKNFHKGGEGICHQILAENYVLPNMFVAGGDSHTCTHGAFGAFATGFGATDMAYIYATGETWIKVPKTIRVDIVGKNENVSAKDIVLRVCKEIGRRGATYMAIEYGGEVVKNMDMDGRLTLCNMAIEMGGKTGVIEADEITYDYLKKERGLSDEDIAKLKKERITVNRDEANYYKEIEIDITDMEEQVAVPHHPDNVKPISDVEGTEINQVFIGSCTNGRLSDLREAAKYLKGREVHKDVKLIVIPASKKVFLQALKEGIIDIFVKAGAMICTPGCGPCLGAHQGVLAEGEICLSTTNRNFKGRMGHINSYIYLASPKIAAISAVKGYITNKLD.

[4Fe-4S] cluster contacts are provided by Cys302, Cys362, and Cys365.

It belongs to the aconitase/IPM isomerase family. LeuC type 2 subfamily. Heterotetramer of 2 HacA and 2 HacB proteins. Requires [4Fe-4S] cluster as cofactor.

The enzyme catalyses (2R)-homocitrate = (2R,3S)-homoisocitrate. It catalyses the reaction (2R)-homocitrate = cis-homoaconitate + H2O. The catalysed reaction is (2R,3S)-homoisocitrate = cis-homoaconitate + H2O. It carries out the reaction cis-(homo)2aconitate + H2O = (2R,3S)-iso(homo)2citrate. The enzyme catalyses cis-(homo)3aconitate + H2O = (2R,3S)-iso(homo)3citrate. It catalyses the reaction (R)-malate = maleate + H2O. The catalysed reaction is cis-aconitate + H2O = D-threo-isocitrate. The protein operates within organic acid metabolism; 2-oxosuberate biosynthesis. In terms of biological role, component of a hydro-lyase with broad substrate specificity for cis-unsaturated tricarboxylic acids. Catalyzes both the reversible dehydration of (R)-homocitrate ((R)-2-hydroxybutane-1,2,4-tricarboxylate) to produce cis-homoaconitate ((Z)-but-1-ene-1,2,4-tricarboxylate), and its hydration to homoisocitrate ((1R,2S)-1-hydroxybutane-1,2,4-tricarboxylate). Is also able to hydrate the analogous longer chain substrates cis-homo(2)-aconitate, cis-homo(3)-aconitate, and even the non-physiological cis-homo(4)-aconitate with similar efficiency. These reactions are part of the biosynthesis pathway of coenzyme B. Can also catalyze the hydration of maleate to (R)-malate, and that of cis-aconitate. Cannot catalyze the hydration of citraconate and the dehydration of (S)-homocitrate, citramalate, 2-isopropylmalate, 3-isopropylmalate, citrate or threo-DL-isocitrate. The polypeptide is Methanogen homoaconitase large subunit (hacA) (Methanocaldococcus jannaschii (strain ATCC 43067 / DSM 2661 / JAL-1 / JCM 10045 / NBRC 100440) (Methanococcus jannaschii)).